A 264-amino-acid polypeptide reads, in one-letter code: MSEMQFGKHLDELRRRALRVVVITGAVTAFLLAFHAEPAELWGATVYYPVPDPLHNMAAQITDHMRAALVPEGVELIQTTPGQAFFAQVYIAALVGVTVSTPVAVRELAAFLRPALRESEIHVGRSISAPAVGLFAAGCAFSYIVVIPYILDFLYKIGESAGITTFLNVMDFVSFVLQFLLAFGISFQLPLVMFAVTASGMVDGRFWRRNIRYALLGIVIFGAAITPDGSGVTMWFVAGPMIGLYFAGMFFAERRERKEKSAGA.

A run of 6 helical transmembrane segments spans residues 20 to 40 (VVVITGAVTAFLLAFHAEPAE), 85 to 105 (FFAQVYIAALVGVTVSTPVAV), 131 to 151 (AVGLFAAGCAFSYIVVIPYIL), 175 to 195 (FVLQFLLAFGISFQLPLVMFA), 211 to 231 (IRYALLGIVIFGAAITPDGSG), and 232 to 252 (VTMWFVAGPMIGLYFAGMFFA).

Belongs to the TatC family. In terms of assembly, forms a complex with TatA.

Its subcellular location is the cell membrane. Its function is as follows. Part of the twin-arginine translocation (Tat) system that transports large folded proteins containing a characteristic twin-arginine motif in their signal peptide across membranes. The chain is Sec-independent protein translocase protein TatC from Cenarchaeum symbiosum (strain A).